The chain runs to 483 residues: Homoserine O-acetyltransferase (483 aa).

The AB hydrolase-1 domain occupies 47–346; that stretch reads NVILICHALT…HFGHDAFLLE (300 aa). The Nucleophile role is filled by Ser-152. Arg-221 lines the substrate pocket. Active-site residues include Asp-307 and His-340. Residue Asp-341 participates in substrate binding. CBS domains follow at residues 367–423 and 428–483; these read MSED…KISS and LSRD…KGTK.

Belongs to the AB hydrolase superfamily. MetX family. In terms of assembly, homodimer.

The protein localises to the cytoplasm. It carries out the reaction L-homoserine + acetyl-CoA = O-acetyl-L-homoserine + CoA. Its pathway is amino-acid biosynthesis; L-methionine biosynthesis via de novo pathway; O-acetyl-L-homoserine from L-homoserine: step 1/1. Functionally, transfers an acetyl group from acetyl-CoA to L-homoserine, forming acetyl-L-homoserine. The polypeptide is Homoserine O-acetyltransferase (Methanohalophilus mahii (strain ATCC 35705 / DSM 5219 / SLP)).